A 100-amino-acid chain; its full sequence is Small ribosomal subunit protein uS14 (100 aa).

The protein belongs to the universal ribosomal protein uS14 family. Part of the 30S ribosomal subunit. Contacts proteins S3 and S10.

Functionally, binds 16S rRNA, required for the assembly of 30S particles and may also be responsible for determining the conformation of the 16S rRNA at the A site. The protein is Small ribosomal subunit protein uS14 of Synechococcus sp. (strain RCC307).